The primary structure comprises 246 residues: Putative pectinesterase 57 (246 aa).

Residues Asn127 and Asn143 are each glycosylated (N-linked (GlcNAc...) asparagine). Substrate is bound at residue Thr152. Asn174 carries N-linked (GlcNAc...) asparagine glycosylation. The Proton donor role is filled by Asp205. Asp226 serves as the catalytic Nucleophile.

It belongs to the pectinesterase family.

It catalyses the reaction [(1-&gt;4)-alpha-D-galacturonosyl methyl ester](n) + n H2O = [(1-&gt;4)-alpha-D-galacturonosyl](n) + n methanol + n H(+). The protein operates within glycan metabolism; pectin degradation; 2-dehydro-3-deoxy-D-gluconate from pectin: step 1/5. Its function is as follows. Acts in the modification of cell walls via demethylesterification of cell wall pectin. This Arabidopsis thaliana (Mouse-ear cress) protein is Putative pectinesterase 57 (PME57).